The primary structure comprises 71 residues: Ubiquinol-cytochrome c reductase complex assembly factor 6 (71 aa).

Residues 1 to 8 (MPAGVPMS) lie on the Mitochondrial matrix side of the membrane. Residues 9 to 25 (TYLKMFAASLLAMCAGA) form a helical; Signal-anchor for type II membrane protein membrane-spanning segment. Residues 26–71 (EVVHRYYRPDLTIPEIPPKRGELKTELLGLKERKHKPQVSQQEELK) lie on the Mitochondrial intermembrane side of the membrane.

Belongs to the UQCC6 family. In terms of assembly, interacts with UQCRC1. Interacts with UQCRQ. Interacts with UQCC5. Forms a complex, named COMB/coordinator of mitochondrial CYTB biogenesis, composed of UQCC1, UQCC2, UQCC4, UQCC5 and UQCC6; stabilizes nascent cytochrome b/MT-CYB and promotes its membrane insertion. Forms a complex, named COMA, composed of UQCC1, UQCC2 and UQCC4; activates MT-CYB translation. Forms a complex, named COMC, composed of UQCC1, UQCC2; UQCC3 and UQCC4; mediates MT-CYB hemylation and association with the first nuclear-encoded complex III subunit UQCRQ. Interacts with MT-CYB. As to expression, cardiac and skeletal muscle (at protein level).

It is found in the mitochondrion inner membrane. Required for the assembly and stability of the mitochondrial ubiquinol-cytochrome c reductase complex (complex III (CIII) or cytochrome b-c1 complex), a multisubunit transmembrane complex that is part of the mitochondrial electron transport chain (ETC) which drives oxidative phosphorylation. Mediates early complex III biogenesis. Participates in regulating the levels of electron transport chain proteins, and therefore energy supply, in response to changes in energy demand. Also required for cytochrome c oxidase complex (complex IV) assembly. The sequence is that of Ubiquinol-cytochrome c reductase complex assembly factor 6 from Homo sapiens (Human).